Here is a 354-residue protein sequence, read N- to C-terminus: Protein CbrA (354 aa).

Belongs to the CbrA family.

The polypeptide is Protein CbrA (cbrA) (Shigella sonnei (strain Ss046)).